A 423-amino-acid chain; its full sequence is Glutamate-1-semialdehyde 2,1-aminomutase (423 aa).

Lys259 carries the post-translational modification N6-(pyridoxal phosphate)lysine.

The protein belongs to the class-III pyridoxal-phosphate-dependent aminotransferase family. HemL subfamily. As to quaternary structure, homodimer. The cofactor is pyridoxal 5'-phosphate.

The protein resides in the cytoplasm. It catalyses the reaction (S)-4-amino-5-oxopentanoate = 5-aminolevulinate. Its pathway is porphyrin-containing compound metabolism; protoporphyrin-IX biosynthesis; 5-aminolevulinate from L-glutamyl-tRNA(Glu): step 2/2. The sequence is that of Glutamate-1-semialdehyde 2,1-aminomutase from Thermosipho africanus (strain TCF52B).